The sequence spans 501 residues: Glycerol kinase (501 aa).

T17 lines the ADP pocket. 3 residues coordinate ATP: T17, T18, and S19. Residue T17 coordinates sn-glycerol 3-phosphate. R21 is an ADP binding site. Residues R87, E88, Y139, and D243 each coordinate sn-glycerol 3-phosphate. Residues R87, E88, Y139, D243, and Q244 each coordinate glycerol. ADP contacts are provided by T265 and G308. Positions 265, 308, 312, and 409 each coordinate ATP. Residues G409 and N413 each coordinate ADP.

This sequence belongs to the FGGY kinase family.

It carries out the reaction glycerol + ATP = sn-glycerol 3-phosphate + ADP + H(+). It functions in the pathway polyol metabolism; glycerol degradation via glycerol kinase pathway; sn-glycerol 3-phosphate from glycerol: step 1/1. With respect to regulation, inhibited by fructose 1,6-bisphosphate (FBP). In terms of biological role, key enzyme in the regulation of glycerol uptake and metabolism. Catalyzes the phosphorylation of glycerol to yield sn-glycerol 3-phosphate. This chain is Glycerol kinase, found in Pseudomonas syringae pv. syringae (strain B728a).